Consider the following 1769-residue polypeptide: Tight junction protein 1 (1769 aa).

The PDZ 1 domain occupies 23–110; that stretch reads TVTLHRAPGF…NAKITIRRKK (88 aa). Over residues 102–112 the composition is skewed to basic residues; that stretch reads AKITIRRKKKV. Positions 102–188 are disordered; the sequence is AKITIRRKKK…QPPKPTKVTL (87 aa). A compositionally biased stretch (acidic residues) spans 123–135; it reads PVSENEDSYDEEV. Serine 125 is subject to Phosphoserine. Tyrosine 131 is modified (phosphotyrosine). The span at 148-174 shows a compositional bias: basic and acidic residues; sequence RRSEKSWARDRSASRERSLSPRSDRRS. Phosphoserine occurs at positions 174, 177, and 178. Threonine 184 bears the Phosphothreonine mark. The region spanning 185–263 is the PDZ 2 domain; the sequence is KVTLVKSRKN…KLKMVVQRDE (79 aa). Residues serine 211 and serine 240 each carry the phosphoserine modification. Position 266 is a phosphothreonine (threonine 266). Phosphoserine is present on residues serine 274, serine 276, serine 279, serine 283, serine 289, serine 293, serine 296, serine 299, serine 322, serine 328, serine 333, serine 336, and serine 352. The interval 295–362 is disordered; that stretch reads ASDHSGRSHD…TPVKHADDHT (68 aa). The segment covering 298 to 326 has biased composition (basic and acidic residues); it reads HSGRSHDRPPRHSRSRSPDQRSEPSDHSR. A Phosphothreonine modification is found at threonine 353. Residues 420–501 form the PDZ 3 domain; it reads SMKLVKFRKG…GEEVTILAQK (82 aa). In terms of domain architecture, SH3 spans 515–583; the sequence is GDSFYIRTHF…PNKNRAEQLA (69 aa). The Guanylate kinase-like domain maps to 609–790; it reads SKRNLRKSRE…WYGALKEAIQ (182 aa). Phosphoserine occurs at positions 616 and 621. An occludin (OCLN)-binding region region spans residues 632–875; it reads YERVVLREAG…GTPPESAITR (244 aa). At threonine 808 the chain carries Phosphothreonine. Serine 809 and serine 820 each carry phosphoserine. Tyrosine 821 is modified (phosphotyrosine). Phosphoserine is present on residues serine 823, serine 827, and serine 836. Disordered stretches follow at residues 824-976 and 1010-1067; these read APGS…LRTP and EMMR…SYTD. Threonine 845, threonine 847, threonine 853, threonine 860, and threonine 867 each carry phosphothreonine. The span at 878-891 shows a compositional bias: basic and acidic residues; sequence EPVREDSSGMHHEN. The segment covering 892 to 905 has biased composition (low complexity); that stretch reads QTYPPYSPQAQPQP. Position 911 is a phosphoserine (serine 911). 2 stretches are compositionally biased toward polar residues: residues 933–952 and 962–976; these read PETN…TLTN and PSTS…LRTP. At serine 967 the chain carries Phosphoserine. Serine 1070 is modified (phosphoserine). Disordered stretches follow at residues 1091-1212, 1224-1261, and 1273-1589; these read SYYD…KAGH, PLIP…MKPQ, and KRSA…EFDS. Over residues 1108 to 1124 the composition is skewed to basic and acidic residues; it reads QHPRDLDSRQHPEESSE. At serine 1138 the chain carries Phosphoserine. A phosphotyrosine mark is found at tyrosine 1139 and tyrosine 1164. An actin-binding region (ABR) region spans residues 1150–1370; that stretch reads RTSTLRHEEQ…FDRRSFENKP (221 aa). A compositionally biased stretch (basic and acidic residues) spans 1273–1286; that stretch reads KRSASLENKKDENH. Over residues 1300–1310 the composition is skewed to pro residues; the sequence is PGAPIIGPKPT. Residues 1335–1346 show a composition bias toward basic and acidic residues; sequence PPEDIVRSNHYD. Tyrosine 1353 bears the Phosphotyrosine mark. Position 1365 is a phosphoserine (serine 1365). Positions 1387–1401 are enriched in polar residues; that stretch reads HSQNQTNFSSYSSKG. Residues 1402 to 1419 show a composition bias toward basic and acidic residues; sequence KSPEADAPDRSFGEKRYE. Serine 1412 is modified (phosphoserine). 2 stretches are compositionally biased toward polar residues: residues 1460 to 1471 and 1514 to 1523; these read NSISLDFQNSLV and AEQTQKTVTP. Positions 1539 to 1548 are enriched in basic and acidic residues; sequence PFERKFESPK. Residues serine 1546 and serine 1618 each carry the phosphoserine modification. The 135-residue stretch at 1635 to 1769 folds into the ZU5 domain; the sequence is ATARGVFNNN…NCVSVLIDHF (135 aa).

The protein belongs to the MAGUK family. As to quaternary structure, homodimer. Forms heterodimers TJP3. Forms a heterodimer (via PDZ2 domain) with TJP2/ZO2 (via PDZ2 domain). Interacts with OCLN. Interacts with CALM, claudins, CGN/cingulin, CXADR, GJA12, GJD3 and UBN1. Interacts (via ZU5 domain) with CDC42BPB and MYZAP. Interacts (via PDZ domain) with GJA1. Interacts (via PDZ domains) with ANKRD2. Interacts with POPDC1 (via the C-terminus cytoplasmic tail). Interacts with HSPA4. Interacts with KIRREL1. Interacts with DLL1. Interacts with USP53 (via the C-terminal region). Interacts with DNMBP (via C-terminal domain); required for the apical cell-cell junction localization of DNMBP. Interacts with SPEF1. Interacts (via N-terminus) with CTNNA1. Interacts with CLDN18. Interacts with CLDN16 (via TRV motif); this is a prerequisite for anchoring of CLDN16 at the tight junction. Interacts with PKP1; the interaction facilitates TJP1/ZO-1 localization to the plasma membrane. Interacts with PATJ (via PDZ1-6 domains); the interaction is required for attachment and extension of TJP1/ZO1 condensates along the apical cell interface. In terms of processing, phosphorylated at tyrosine redidues in response to epidermal growth factor (EGF). This response is dependent on an intact actin microfilament system. Dephosphorylated by PTPRJ.

It localises to the cell membrane. Its subcellular location is the cell junction. It is found in the tight junction. The protein localises to the gap junction. In terms of biological role, TJP1, TJP2, and TJP3 are closely related scaffolding proteins that link tight junction (TJ) transmembrane proteins such as claudins, junctional adhesion molecules, and occludin to the actin cytoskeleton. Forms a multistranded TJP1/ZO1 condensate which elongates to form a tight junction belt, the belt is anchored at the apical cell membrane via interaction with PATJ. The tight junction acts to limit movement of substances through the paracellular space and as a boundary between the compositionally distinct apical and basolateral plasma membrane domains of epithelial and endothelial cells. Necessary for lumenogenesis, and particularly efficient epithelial polarization and barrier formation. Plays a role in the regulation of cell migration by targeting CDC42BPBb to the leading edge of migrating cells. With TJP2 and TJP3, participates in the junctional retention and stability of the transcription factor DBPA, but is not involved in its shuttling to the nucleus. May play a role in mediating cell morphology changes during ameloblast differentiation via its role in tight junctions. The sequence is that of Tight junction protein 1 from Canis lupus familiaris (Dog).